A 1371-amino-acid chain; its full sequence is Pleckstrin homology-like domain family B member 1 (1371 aa).

Ser51 bears the Phosphoserine mark. Residues Thr64 to Gly125 form the FHA domain. Position 131 is an asymmetric dimethylarginine (Arg131). The disordered stretch occupies residues Gly153–Ala182. Residues Asn157–Pro175 show a composition bias toward polar residues. A phosphoserine mark is found at Ser192, Ser220, and Ser223. 2 disordered regions span residues Ala211–Pro336 and Pro368–Ile573. Composition is skewed to low complexity over residues Ser252–Ser273 and Leu296–Pro312. Ser325 and Ser335 each carry phosphoserine. The span at Pro368–Ala377 shows a compositional bias: polar residues. Phosphoserine occurs at positions 382, 405, 431, 445, 463, 472, 491, and 503. Residues Pro464–Arg477 show a composition bias toward low complexity. Residues Lys483–Arg493 are compositionally biased toward basic and acidic residues. Arg514 carries the post-translational modification Omega-N-methylarginine. A phosphoserine mark is found at Ser520 and Ser522. Thr524 carries the phosphothreonine modification. Phosphoserine occurs at positions 535, 541, 553, 557, 565, 580, 585, and 683. Residues Gly547 to Arg559 show a composition bias toward polar residues. Disordered regions lie at residues Glu672 to His714 and Gly942 to Thr1020. Composition is skewed to basic and acidic residues over residues Glu682–Cys696 and Gln703–His714. Positions Asp688–Lys798 form a coiled coil. 2 positions are modified to phosphoserine: Ser976 and Ser1022. Positions Ser976–Ser997 are enriched in low complexity. The segment at Ser1124–Ser1143 is disordered. Residues Met1150 to Leu1216 adopt a coiled-coil conformation. The PH domain maps to Ser1261–Glu1364.

This Mus musculus (Mouse) protein is Pleckstrin homology-like domain family B member 1 (Phldb1).